We begin with the raw amino-acid sequence, 205 residues long: SREBP regulating gene protein (205 aa).

The Cytoplasmic segment spans residues 1–16; that stretch reads MALYVSMVWRKILRKR. The helical transmembrane segment at 17-35 threads the bilayer; that stretch reads WVLGVVFGLSLIYFLTSTF. Over 36 to 205 the chain is Lumenal; the sequence is KQEERTVRDR…GESPPELLPI (170 aa). Asn67 carries N-linked (GlcNAc...) asparagine glycosylation.

Belongs to the SPRING family.

It is found in the golgi apparatus membrane. Its function is as follows. Positively regulates hepatic SREBP signaling pathway by modulating the proper localization of SCAP (SREBP cleavage-activating protein) to the endoplasmic reticulum, thereby controlling the level of functional SCAP. In Xenopus laevis (African clawed frog), this protein is SREBP regulating gene protein.